The chain runs to 271 residues: Fork head domain-containing protein FD5 (271 aa).

A DNA-binding region (fork-head) is located at residues 12–103 (QKPPYSYISL…FDMFENGSLL (92 aa)).

Expressed in early embryogenesis in 14 symmetrical pairs of segmentally arranged neuroblasts and in developing peripheral nervous system. Also, later in embryogenesis, in a cluster of cells in head region.

It is found in the nucleus. In terms of biological role, involved in development during embryogenesis. The polypeptide is Fork head domain-containing protein FD5 (fd96Cb) (Drosophila melanogaster (Fruit fly)).